The chain runs to 673 residues: Protein kinase ORF74 (673 aa).

The 277-residue stretch at 128-404 folds into the Protein kinase domain; it reads TDTDEAVARG…ARELLVYPRY (277 aa). Asp-252 functions as the Proton acceptor in the catalytic mechanism. The disordered stretch occupies residues 340–364; it reads MDNDALDSRRTGRDGDPVNPEGFGT. The segment covering 345–355 has biased composition (basic and acidic residues); it reads LDSRRTGRDGD.

It belongs to the protein kinase superfamily. Ser/Thr protein kinase family.

It catalyses the reaction L-seryl-[protein] + ATP = O-phospho-L-seryl-[protein] + ADP + H(+). The enzyme catalyses L-threonyl-[protein] + ATP = O-phospho-L-threonyl-[protein] + ADP + H(+). The polypeptide is Protein kinase ORF74 (ORF74) (Ictalurid herpesvirus 1 (strain Auburn) (IcHV-1)).